The chain runs to 368 residues: WD repeat-containing protein 53 homolog (368 aa).

WD repeat units lie at residues 27 to 66 (GHKDTVLCISSHNKKEIIASGSDDCTVRIWDLNTNKSIQS), 71 to 108 (FQGNPVNNVCFDQDFTLYCSYDNIIVSFDLRQPNVILK), 116 to 155 (FNTEEINQLSFDSKYQYLAACDDSGQTKIIDVTKNKLVES), 159 to 199 (KHTN…VLHR), 228 to 267 (LNPPFVTSVDCSNNSKYVAISMGDGTIVINEISSFKQYLK), and 271 to 315 (IHKS…NTKV). The disordered stretch occupies residues 207–231 (LPQNISKSQQQQQETTEPNRMLNPP).

Belongs to the WD repeat WDR53 family.

This chain is WD repeat-containing protein 53 homolog (wdr53), found in Dictyostelium discoideum (Social amoeba).